A 137-amino-acid chain; its full sequence is Protein LTO1 homolog (137 aa).

An N-acetylalanine modification is found at A2. The deca-GX3 motif; required for interaction with YAE1 and the CIA complex stretch occupies residues 22 to 58 (GYQEGYEEGSSLGIVEGKRYGMVHGAKIGSEIGCYRG).

This sequence belongs to the LTO1 family. As to quaternary structure, forms a complex with YAE1. Interacts with PYCR1 and PYCR2.

The protein localises to the nucleus. Its function is as follows. The complex LTO1:YAE1 functions as a target specific adapter that probably recruits apo-ABCE1 to the cytosolic iron-sulfur protein assembly (CIA) complex machinery. May be required for biogenesis of the large ribosomal subunit and initiation of translation. May play a role in the regulation of proline metabolism and ROS production. The protein is Protein LTO1 homolog of Mus musculus (Mouse).